The sequence spans 449 residues: Probable glycosyltransferase 5 (449 aa).

Over residues 1–14 (MMEKHGGKVTSDRR) the composition is skewed to basic and acidic residues. A disordered region spans residues 1-24 (MMEKHGGKVTSDRRAGRRQHGQRC). Residues 1–28 (MMEKHGGKVTSDRRAGRRQHGQRCSASD) lie on the Cytoplasmic side of the membrane. A helical; Signal-anchor for type II membrane protein membrane pass occupies residues 29–49 (AAPLVVVVILIVAALFLILGP). Over 50 to 449 (TGSSSFTVPR…HPTFRAARPT (400 aa)) the chain is Lumenal. The segment at 74–109 (APPPPPPPAQMQAGANASSEEDSGLPPPRQLTDPPY) is disordered. N-linked (GlcNAc...) asparagine glycans are attached at residues Asn-89, Asn-413, and Asn-422.

This sequence belongs to the glycosyltransferase 34 family.

The protein localises to the golgi apparatus membrane. Its function is as follows. Probable glycosyltransferase that may be involved in the biosynthesis of xyloglucan. This is Probable glycosyltransferase 5 from Oryza sativa subsp. japonica (Rice).